The chain runs to 256 residues: Triosephosphate isomerase (256 aa).

A substrate-binding site is contributed by 9–11; the sequence is NWK. The active-site Electrophile is His94. The active-site Proton acceptor is the Glu166. Substrate contacts are provided by residues Gly172, Ser211, and 232-233; that span reads GG.

This sequence belongs to the triosephosphate isomerase family. Homodimer.

The protein resides in the cytoplasm. It carries out the reaction D-glyceraldehyde 3-phosphate = dihydroxyacetone phosphate. It participates in carbohydrate biosynthesis; gluconeogenesis. The protein operates within carbohydrate degradation; glycolysis; D-glyceraldehyde 3-phosphate from glycerone phosphate: step 1/1. Functionally, involved in the gluconeogenesis. Catalyzes stereospecifically the conversion of dihydroxyacetone phosphate (DHAP) to D-glyceraldehyde-3-phosphate (G3P). The chain is Triosephosphate isomerase from Natranaerobius thermophilus (strain ATCC BAA-1301 / DSM 18059 / JW/NM-WN-LF).